A 166-amino-acid polypeptide reads, in one-letter code: Small ribosomal subunit protein uS5 (166 aa).

The S5 DRBM domain maps to 11 to 74 (LIEKLITVNR…EKARRNMVTV (64 aa)).

The protein belongs to the universal ribosomal protein uS5 family. In terms of assembly, part of the 30S ribosomal subunit. Contacts proteins S4 and S8.

In terms of biological role, with S4 and S12 plays an important role in translational accuracy. Its function is as follows. Located at the back of the 30S subunit body where it stabilizes the conformation of the head with respect to the body. The polypeptide is Small ribosomal subunit protein uS5 (Idiomarina loihiensis (strain ATCC BAA-735 / DSM 15497 / L2-TR)).